The sequence spans 529 residues: Protein PAT1 homolog 2 (529 aa).

The segment at 153–183 is disordered; that stretch reads QILQQQQRWRRRRSPTARSVPAQKPWSREPA.

The protein belongs to the PAT1 family. Interacts with LSM1.

The protein resides in the cytoplasm. Its subcellular location is the nucleus. RNA-binding protein that acts as a translational repressor. The protein is Protein PAT1 homolog 2 (Patl2) of Mus musculus (Mouse).